The primary structure comprises 332 residues: NADH-quinone oxidoreductase subunit H (332 aa).

A run of 9 helical transmembrane segments spans residues 4–24 (FAFFALETLIKCIIIIAIFAS), 44–64 (IGPDMVGPFGLIQLVADMIKL), 78–98 (FIFAIAPLISAICAFVSLAAI), 120–140 (VALLFVIGTSGLCFYAVFLGG), 165–185 (VGALALIAIIMLVGSFSLVDI), 194–214 (FSWLIFKQPLAFVLFIIALFI), 255–275 (IAGAILVTLLFLGGFNSFWII), 279–299 (IMMIVKSSFIFFWYFWARAAF), and 312–332 (YLILIPLAVLNLLITALTVLL).

Belongs to the complex I subunit 1 family. NDH-1 is composed of 14 different subunits. Subunits NuoA, H, J, K, L, M, N constitute the membrane sector of the complex.

It localises to the cell inner membrane. It carries out the reaction a quinone + NADH + 5 H(+)(in) = a quinol + NAD(+) + 4 H(+)(out). NDH-1 shuttles electrons from NADH, via FMN and iron-sulfur (Fe-S) centers, to quinones in the respiratory chain. The immediate electron acceptor for the enzyme in this species is believed to be ubiquinone. Couples the redox reaction to proton translocation (for every two electrons transferred, four hydrogen ions are translocated across the cytoplasmic membrane), and thus conserves the redox energy in a proton gradient. This subunit may bind ubiquinone. In Campylobacter jejuni subsp. jejuni serotype O:23/36 (strain 81-176), this protein is NADH-quinone oxidoreductase subunit H.